An 864-amino-acid polypeptide reads, in one-letter code: MTQDLSKHTPMMAQYLQLKAQNPDILLFYRMGDFYELFYDDAKKAAALLDISLTKRGASAGEPIPMAGVPYHAVEGYLAKLVSLGESVAICEQIGDPATSKGPVERKVVRIVTPGTVSDEALLPERQDNLVAAIYEEKGVFAIATLDMTSGRFLITELPNKEALAAELQRLLPAEILYAEDFSAAEILNNYKGLRRRPVWEFELVTAINLLNRQFGTQSLAGFGVEKAVVALCAAGCVLHYAQETQRTALPHINSIHLAQNSDTVLLDAATRRNLELTQNLAGGTENTLAAVLDKCVTPMGSRLLKRWIHQPIRDLEKLKKRQDIIDTLQKEQRIELLQPLLQNVGDMERILARVALRSARPRDLTRLRTALAQLPDIAKNAKNLTASLDALVAQIGDFSELHALLERAIIETPPQLIRDGGVIAEGYNAELDEWRELSAGATQYLENLEIREREATGIDTLKIGFNAVHGYYIQISQGQAHKAPMHYVRRQTLKNAERYIIPELKTYEDKVLKAKGASLALEKQLYDELFDLLMPRLGEMQLAAMALSELDVLTNLAERAESLNYVRPTFSLQRGVNIKGGRHPVVEQVLKDPFIANPVFLNAQRHLLVVTGPNMGGKSTYMRQIALISLMAYIGSFVPADSAEIGALDRIFTRIGASDDLASGRSTFMVEMTEMANILHQATENSLVLIDEIGRGTSTYDGLSLAWACAEWLAKKTQSLTLFATHYFELTSLPSQLKGVANVHLDAREHQDSIVFMHSVQEGAASKSYGLAVAALAGVPKQVIQLAKQRLAHLEEISLQTKEAHDNPQGDLLFAADLQETPQIQPLVAQQSELEKALMSIDPDELTPRQALEALYRLKKLMA.

613–620 (GPNMGGKS) serves as a coordination point for ATP.

The protein belongs to the DNA mismatch repair MutS family.

This protein is involved in the repair of mismatches in DNA. It is possible that it carries out the mismatch recognition step. This protein has a weak ATPase activity. The polypeptide is DNA mismatch repair protein MutS (Actinobacillus pleuropneumoniae serotype 7 (strain AP76)).